We begin with the raw amino-acid sequence, 178 residues long: Oligoribonuclease (178 aa).

The region spanning 7-168 (LIWIDLEMTG…DDIRESIAEL (162 aa)) is the Exonuclease domain. Tyr-128 is a catalytic residue.

Belongs to the oligoribonuclease family.

The protein resides in the cytoplasm. 3'-to-5' exoribonuclease specific for small oligoribonucleotides. The chain is Oligoribonuclease from Francisella tularensis subsp. tularensis (strain FSC 198).